A 237-amino-acid chain; its full sequence is Purine nucleoside phosphorylase DeoD-type (237 aa).

His-4 contributes to the a purine D-ribonucleoside binding site. Phosphate contacts are provided by residues Gly-20, Arg-24, Arg-43, and 87-90 (RVGT). A purine D-ribonucleoside is bound by residues 179 to 181 (EME) and 203 to 204 (SD). Residue Asp-204 is the Proton donor of the active site.

Belongs to the PNP/UDP phosphorylase family. Homohexamer; trimer of homodimers.

It carries out the reaction a purine D-ribonucleoside + phosphate = a purine nucleobase + alpha-D-ribose 1-phosphate. The enzyme catalyses a purine 2'-deoxy-D-ribonucleoside + phosphate = a purine nucleobase + 2-deoxy-alpha-D-ribose 1-phosphate. Its function is as follows. Catalyzes the reversible phosphorolytic breakdown of the N-glycosidic bond in the beta-(deoxy)ribonucleoside molecules, with the formation of the corresponding free purine bases and pentose-1-phosphate. This Clostridium beijerinckii (strain ATCC 51743 / NCIMB 8052) (Clostridium acetobutylicum) protein is Purine nucleoside phosphorylase DeoD-type.